The chain runs to 869 residues: Bifunctional uridylyltransferase/uridylyl-removing enzyme (869 aa).

The interval 1 to 332 (MTATPADRPD…QFDGEAVPVQ (332 aa)) is uridylyltransferase. A uridylyl-removing region spans residues 333 to 691 (LDAGFSLRRG…RRAVPDNDAL (359 aa)). Residues 450–572 (VDQHTLMVLR…VGTRERLDYL (123 aa)) form the HD domain. ACT domains lie at 692–771 (EVFV…PSRR) and 798–869 (RISL…LDPT).

This sequence belongs to the GlnD family. Mg(2+) serves as cofactor.

The enzyme catalyses [protein-PII]-L-tyrosine + UTP = [protein-PII]-uridylyl-L-tyrosine + diphosphate. The catalysed reaction is [protein-PII]-uridylyl-L-tyrosine + H2O = [protein-PII]-L-tyrosine + UMP + H(+). With respect to regulation, uridylyltransferase (UTase) activity is inhibited by glutamine, while glutamine activates uridylyl-removing (UR) activity. Its function is as follows. Modifies, by uridylylation and deuridylylation, the PII regulatory proteins (GlnB and homologs), in response to the nitrogen status of the cell that GlnD senses through the glutamine level. Under low glutamine levels, catalyzes the conversion of the PII proteins and UTP to PII-UMP and PPi, while under higher glutamine levels, GlnD hydrolyzes PII-UMP to PII and UMP (deuridylylation). Thus, controls uridylylation state and activity of the PII proteins, and plays an important role in the regulation of nitrogen assimilation and metabolism. The polypeptide is Bifunctional uridylyltransferase/uridylyl-removing enzyme (Xanthomonas campestris pv. campestris (strain B100)).